The primary structure comprises 257 residues: 3-deoxy-manno-octulosonate cytidylyltransferase (257 aa).

Belongs to the KdsB family.

It localises to the cytoplasm. It carries out the reaction 3-deoxy-alpha-D-manno-oct-2-ulosonate + CTP = CMP-3-deoxy-beta-D-manno-octulosonate + diphosphate. The protein operates within nucleotide-sugar biosynthesis; CMP-3-deoxy-D-manno-octulosonate biosynthesis; CMP-3-deoxy-D-manno-octulosonate from 3-deoxy-D-manno-octulosonate and CTP: step 1/1. It participates in bacterial outer membrane biogenesis; lipopolysaccharide biosynthesis. In terms of biological role, activates KDO (a required 8-carbon sugar) for incorporation into bacterial lipopolysaccharide in Gram-negative bacteria. This Chromohalobacter salexigens (strain ATCC BAA-138 / DSM 3043 / CIP 106854 / NCIMB 13768 / 1H11) protein is 3-deoxy-manno-octulosonate cytidylyltransferase.